The chain runs to 485 residues: Probable glycine dehydrogenase (decarboxylating) subunit 2 (485 aa).

At Lys269 the chain carries N6-(pyridoxal phosphate)lysine.

The protein belongs to the GcvP family. C-terminal subunit subfamily. As to quaternary structure, the glycine cleavage system is composed of four proteins: P, T, L and H. In this organism, the P 'protein' is a heterodimer of two subunits. It depends on pyridoxal 5'-phosphate as a cofactor.

It carries out the reaction N(6)-[(R)-lipoyl]-L-lysyl-[glycine-cleavage complex H protein] + glycine + H(+) = N(6)-[(R)-S(8)-aminomethyldihydrolipoyl]-L-lysyl-[glycine-cleavage complex H protein] + CO2. In terms of biological role, the glycine cleavage system catalyzes the degradation of glycine. The P protein binds the alpha-amino group of glycine through its pyridoxal phosphate cofactor; CO(2) is released and the remaining methylamine moiety is then transferred to the lipoamide cofactor of the H protein. This chain is Probable glycine dehydrogenase (decarboxylating) subunit 2, found in Chlorobium phaeovibrioides (strain DSM 265 / 1930) (Prosthecochloris vibrioformis (strain DSM 265)).